An 802-amino-acid chain; its full sequence is ATP-dependent zinc metalloprotease FTSH 3, mitochondrial (802 aa).

Residues 1–21 constitute a mitochondrion transit peptide; that stretch reads MSLSSLSRALARSARSSRQRQ. Residues 1–23 show a composition bias toward low complexity; that stretch reads MSLSSLSRALARSARSSRQRQGS. Disordered stretches follow at residues 1 to 33 and 85 to 120; these read MSLSSLSRALARSARSSRQRQGSLLGGHGGLRA and DKSKKNHGKHSEEENKGKGDESDKSDSKKQSSSGDQ. Residues 85 to 113 are compositionally biased toward basic and acidic residues; that stretch reads DKSKKNHGKHSEEENKGKGDESDKSDSKK. Residues 133 to 153 traverse the membrane as a helical segment; it reads MIAPLFLFGLLLLSASASSSE. Position 360–367 (360–367) interacts with ATP; that stretch reads GPPGTGKT. Residue H585 participates in Zn(2+) binding. E586 is a catalytic residue. Zn(2+)-binding residues include H589 and D661. Residues 773–802 form a disordered region; the sequence is KQGFQDEDSNRNAELSNADGASSLGEAVAS.

This sequence in the N-terminal section; belongs to the AAA ATPase family. It in the C-terminal section; belongs to the peptidase M41 family. The cofactor is Zn(2+).

The protein resides in the mitochondrion inner membrane. Probable ATP-dependent zinc metallopeptidase. The chain is ATP-dependent zinc metalloprotease FTSH 3, mitochondrial (FTSH3) from Oryza sativa subsp. japonica (Rice).